The sequence spans 793 residues: MEHHCGLITSNKETVPLKNISVTLSINEFVAAVVATLNYENEEKVPLEATFVFPMDEDSAVYSFEALVDGKKIVAELQDKMKAHSEYEEALSQGHQAYLLEEDDYSRDVFSCNVGNLQPGAKVAVTLRYVQELPLETDGALRYLLPAILNPRYQLSEQSANSCLNIQKPTVPLEDLPYTLNMTATITSQHGIERVQSNCSLSPIQYLTDDKTSAQVSLTEGHKFDRDVELLIYYNEVHSPSVAVEMGMLDMKPDSLMGAPSAMVSFYPDIPEVEASKACGEFVFLMDRSGSMDSPMSTENNSQLRIEAAKETLLLLLKSLPMGCYFNIYGFGSSYEKFFPESVKYTQDTMEDAVKRVKALKANLGGTEILTPLCNIYKASSIPGHPLQLFVFTDGEVSDTFSVIREVKLNSKKHRCFSFGIGQGASTSLIKNIARVSGGTAVFITGKDRMQTKALGSLKFALQCAVDNISLSWDLPPGLSVKMLSPEQLTIFRGQRLIIYAQLTGLMPQVESTGAVCLKHILQGRSLENRVTFSLQPKANDNFTIHRLAAKSLIQTKDFGSQEASKEEKEDVMNISLQSGVLSSFTAFIAINKELNKPVQGPLAHRVIPRPVMAGSSSMRFYSSFSGGFKGPQPRSLRVPAYDLCSAESANLVLKKSACSAIQKKKTNSSTNKSNLKKEHKAFGENAVVQLISLQKANGSWELDEDLTKILGTKSKDIKAANPAKHEDPSAWSTVLAVVWLHANGTDLKCEWELLERKAVAWLHDHAGSSIPMLVQAANSLLKLSVNPAVFGV.

The VIT domain maps to Met-1–Gln-131. A VWFA domain is found at Glu-281–Ile-469. A Phosphotyrosine modification is found at Tyr-622.

Functionally, may play a role in tumorigenesis as a tumor suppressor. Altered expression of this protein and disruption of the molecular pathway it is involved in may contribute directly to or modify tumorigenesis. In Mus musculus (Mouse), this protein is von Willebrand factor A domain-containing protein 5A (Vwa5a).